We begin with the raw amino-acid sequence, 1308 residues long: Receptor tyrosine-protein kinase erbB-4 (1308 aa).

The N-terminal stretch at 1–25 (MKPATGLWVWVSLLVAAGTVQPSDS) is a signal peptide. Topologically, residues 26–651 (QSVCAGTENK…STLPQHARTP (626 aa)) are extracellular. C29 and C56 are joined by a disulfide. N138, N174, and N181 each carry an N-linked (GlcNAc...) asparagine glycan. Cystine bridges form between C156-C186, C189-C197, C193-C205, C213-C221, C217-C229, C230-C238, C234-C246, C249-C258, C262-C289, C293-C304, C308-C323, and C326-C330. The N-linked (GlcNAc...) asparagine glycan is linked to N253. Residues N358, N410, N473, and N495 are each glycosylated (N-linked (GlcNAc...) asparagine). 10 cysteine pairs are disulfide-bonded: C503–C512, C507–C520, C523–C532, C536–C552, C555–C569, C559–C577, C580–C589, C593–C614, C617–C625, and C621–C633. Residue N548 is glycosylated (N-linked (GlcNAc...) asparagine). N576 carries N-linked (GlcNAc...) asparagine glycosylation. N-linked (GlcNAc...) asparagine glycosylation is present at N620. Residues 652–675 (LIAAGVIGGLFILVIVGLTFAVYV) traverse the membrane as a helical segment. Positions 676–684 (RRKSIKKKR) match the Nuclear localization signal motif. The Cytoplasmic portion of the chain corresponds to 676–1308 (RRKSIKKKRA…PPYRHRNTVV (633 aa)). A Protein kinase domain is found at 718–985 (LKRVKVLGSG…RMARDPQRYL (268 aa)). Residues 724 to 732 (LGSGAFGTV), K751, 797 to 799 (QLM), and 843 to 848 (DLAARN) contribute to the ATP site. The active-site Proton acceptor is the D843. Y875, Y1035, Y1056, Y1150, Y1162, Y1188, Y1202, Y1242, Y1258, and Y1284 each carry phosphotyrosine; by autocatalysis. 2 consecutive short sequence motifs (PPxY motif) follow at residues 1032–1035 (PPIY) and 1053–1056 (PPAY). The interval 1117 to 1150 (PHVQEDSSTQRYSADPTVFAPERSPRGELDEEGY) is disordered. The PPxY motif 3 signature appears at 1298 to 1301 (PPPY). The PDZ-binding signature appears at 1306–1308 (TVV).

Belongs to the protein kinase superfamily. Tyr protein kinase family. EGF receptor subfamily. In terms of assembly, monomer in the absence of bound ligand. Homodimer or heterodimer with another ERBB family member upon ligand binding, thus forming heterotetramers. Interacts with EGFR and ERBB2. Interacts with CBFA2T3. Interacts with DLG2 (via its PDZ domain), DLG3 (via its PDZ domain), DLG4 (via its PDZ domain) and SNTB2 (via its PDZ domain). Interacts with MUC1. Interacts (via its PPxy motifs) with WWOX. Interacts (via the PPxY motif 3 of isoform JM-A CYT-2) with YAP1 (via the WW domain 1 of isoform 1). Interacts (isoform JM-A CYT-1 and isoform JM-B CYT-1) with WWP1. Interacts (via its intracellular domain) with TRIM28. Interacts (via the intracellular domains of both CYT-1 and CYT-2 isoforms) with KAP1; the interaction does not phosphorylate KAP1 but represses ERBB4-mediated transcriptional activity. Interacts with PRPU, DDX23, MATR3, RBM15, ILF3, KAP1, U5S1, U2SURP, ITCH, HNRNPU, AP2A1, NULC, LEO1, WWP2, IGHG1, HXK1, GRB7 and SRRT. Interacts (phosphorylated isoform JM-A CYT-1 and isoform JM-B CYT-1) with PIK3R1. Interacts with SHC1. Interacts with GRB2. Interacts (soluble intracellular domain) with STAT5A. Interacts (soluble intracellular domain) with BCL2. Interacts (phosphorylated) with STAT1. Isoform JM-A CYT-1 and isoform JM-A CYT-2 are processed by ADAM17. Proteolytic processing in response to ligand or 12-O-tetradecanoylphorbol-13-acetate stimulation results in the production of 120 kDa soluble receptor forms and intermediate membrane-anchored 80 kDa fragments (m80HER4), which are further processed by a presenilin-dependent gamma-secretase to release a cytoplasmic intracellular domain (E4ICD; E4ICD1/s80Cyt1 or E4ICD2/s80Cyt2, depending on the isoform). Membrane-anchored 80 kDa fragments of the processed isoform JM-A CYT-1 are more readily degraded by the proteasome than fragments of isoform JM-A CYT-2, suggesting a prevalence of E4ICD2 over E4ICD1. Isoform JM-B CYT-1 and isoform JM-B CYT-2 lack the ADAM17 cleavage site and are not processed by ADAM17, precluding further processing by gamma-secretase. In terms of processing, autophosphorylated on tyrosine residues in response to ligand binding. Autophosphorylation occurs in trans, i.e. one subunit of the dimeric receptor phosphorylates tyrosine residues on the other subunit. Ligands trigger phosphorylation at specific tyrosine residues, thereby creating binding sites for scaffold proteins and effectors. Constitutively phosphorylated at a basal level when overexpressed in heterologous systems; ligand binding leads to increased phosphorylation. Phosphorylation at Tyr-1035 is important for interaction with STAT1. Phosphorylation at Tyr-1056 is important for interaction with PIK3R1. Phosphorylation at Tyr-1242 is important for interaction with SHC1. Phosphorylation at Tyr-1188 may also contribute to the interaction with SHC1. Isoform JM-A CYT-2 is constitutively phosphorylated on tyrosine residues in a ligand-independent manner. E4ICD2 but not E4ICD1 is phosphorylated on tyrosine residues. Post-translationally, ubiquitinated. During mitosis, the ERBB4 intracellular domain is ubiquitinated by the APC/C complex and targeted to proteasomal degradation. Isoform JM-A CYT-1 and isoform JM-B CYT-1 are ubiquitinated by WWP1. The ERBB4 intracellular domain (E4ICD1) is ubiquitinated, and this involves NEDD4. In terms of tissue distribution, expressed at highest levels in brain, heart, kidney, in addition to skeletal muscle, parathyroid, cerebellum, pituitary, spleen, testis and breast. Lower levels in thymus, lung, salivary gland, and pancreas. Isoform JM-A CYT-1 and isoform JM-B CYT-1 are expressed in cerebellum, but only the isoform JM-B is expressed in the heart.

The protein localises to the cell membrane. Its subcellular location is the nucleus. It is found in the mitochondrion. The enzyme catalyses L-tyrosyl-[protein] + ATP = O-phospho-L-tyrosyl-[protein] + ADP + H(+). Its activity is regulated as follows. Binding of a cognate ligand leads to dimerization and activation by autophosphorylation on tyrosine residues. In vitro kinase activity is increased by Mg(2+). Inhibited by PD153035, lapatinib, gefitinib (iressa, ZD1839), AG1478 and BIBX1382BS. Its function is as follows. Tyrosine-protein kinase that plays an essential role as cell surface receptor for neuregulins and EGF family members and regulates development of the heart, the central nervous system and the mammary gland, gene transcription, cell proliferation, differentiation, migration and apoptosis. Required for normal cardiac muscle differentiation during embryonic development, and for postnatal cardiomyocyte proliferation. Required for normal development of the embryonic central nervous system, especially for normal neural crest cell migration and normal axon guidance. Required for mammary gland differentiation, induction of milk proteins and lactation. Acts as cell-surface receptor for the neuregulins NRG1, NRG2, NRG3 and NRG4 and the EGF family members BTC, EREG and HBEGF. Ligand binding triggers receptor dimerization and autophosphorylation at specific tyrosine residues that then serve as binding sites for scaffold proteins and effectors. Ligand specificity and signaling is modulated by alternative splicing, proteolytic processing, and by the formation of heterodimers with other ERBB family members, thereby creating multiple combinations of intracellular phosphotyrosines that trigger ligand- and context-specific cellular responses. Mediates phosphorylation of SHC1 and activation of the MAP kinases MAPK1/ERK2 and MAPK3/ERK1. Isoform JM-A CYT-1 and isoform JM-B CYT-1 phosphorylate PIK3R1, leading to the activation of phosphatidylinositol 3-kinase and AKT1 and protect cells against apoptosis. Isoform JM-A CYT-1 and isoform JM-B CYT-1 mediate reorganization of the actin cytoskeleton and promote cell migration in response to NRG1. Isoform JM-A CYT-2 and isoform JM-B CYT-2 lack the phosphotyrosine that mediates interaction with PIK3R1, and hence do not phosphorylate PIK3R1, do not protect cells against apoptosis, and do not promote reorganization of the actin cytoskeleton and cell migration. Proteolytic processing of isoform JM-A CYT-1 and isoform JM-A CYT-2 gives rise to the corresponding soluble intracellular domains (4ICD) that translocate to the nucleus, promote nuclear import of STAT5A, activation of STAT5A, mammary epithelium differentiation, cell proliferation and activation of gene expression. The ERBB4 soluble intracellular domains (4ICD) colocalize with STAT5A at the CSN2 promoter to regulate transcription of milk proteins during lactation. The ERBB4 soluble intracellular domains can also translocate to mitochondria and promote apoptosis. The chain is Receptor tyrosine-protein kinase erbB-4 (ERBB4) from Homo sapiens (Human).